Reading from the N-terminus, the 296-residue chain is ATP synthase gamma chain (296 aa).

The protein belongs to the ATPase gamma chain family. As to quaternary structure, F-type ATPases have 2 components, CF(1) - the catalytic core - and CF(0) - the membrane proton channel. CF(1) has five subunits: alpha(3), beta(3), gamma(1), delta(1), epsilon(1). CF(0) has three main subunits: a, b and c.

Its subcellular location is the cell inner membrane. Its function is as follows. Produces ATP from ADP in the presence of a proton gradient across the membrane. The gamma chain is believed to be important in regulating ATPase activity and the flow of protons through the CF(0) complex. The chain is ATP synthase gamma chain from Jannaschia sp. (strain CCS1).